The primary structure comprises 353 residues: Methylthioribose-1-phosphate isomerase (353 aa).

Substrate contacts are provided by residues 51-53 (RGA), R94, and Q199. The Proton donor role is filled by D240. 250-251 (NK) lines the substrate pocket.

This sequence belongs to the eIF-2B alpha/beta/delta subunits family. MtnA subfamily. Homodimer.

It catalyses the reaction 5-(methylsulfanyl)-alpha-D-ribose 1-phosphate = 5-(methylsulfanyl)-D-ribulose 1-phosphate. It functions in the pathway amino-acid biosynthesis; L-methionine biosynthesis via salvage pathway; L-methionine from S-methyl-5-thio-alpha-D-ribose 1-phosphate: step 1/6. Its function is as follows. Catalyzes the interconversion of methylthioribose-1-phosphate (MTR-1-P) into methylthioribulose-1-phosphate (MTRu-1-P). The polypeptide is Methylthioribose-1-phosphate isomerase (Bacillus pumilus (strain SAFR-032)).